The sequence spans 157 residues: Small ribosomal subunit protein uS7 (157 aa).

The protein belongs to the universal ribosomal protein uS7 family. In terms of assembly, part of the 30S ribosomal subunit. Contacts proteins S9 and S11.

One of the primary rRNA binding proteins, it binds directly to 16S rRNA where it nucleates assembly of the head domain of the 30S subunit. Is located at the subunit interface close to the decoding center, probably blocks exit of the E-site tRNA. In Herpetosiphon aurantiacus (strain ATCC 23779 / DSM 785 / 114-95), this protein is Small ribosomal subunit protein uS7.